The chain runs to 340 residues: DNA-directed RNA polymerase subunit alpha (340 aa).

Residues 1 to 238 form an alpha N-terminal domain (alpha-NTD) region; it reads MVDPIVTKNW…EQLSIFINFD (238 aa). The segment at 255–340 is alpha C-terminal domain (alpha-CTD); that stretch reads LNENLFRSVD…AAPQGGAPKV (86 aa).

Belongs to the RNA polymerase alpha chain family. Homodimer. The RNAP catalytic core consists of 2 alpha, 1 beta, 1 beta' and 1 omega subunit. When a sigma factor is associated with the core the holoenzyme is formed, which can initiate transcription.

The enzyme catalyses RNA(n) + a ribonucleoside 5'-triphosphate = RNA(n+1) + diphosphate. DNA-dependent RNA polymerase catalyzes the transcription of DNA into RNA using the four ribonucleoside triphosphates as substrates. In Anaeromyxobacter dehalogenans (strain 2CP-1 / ATCC BAA-258), this protein is DNA-directed RNA polymerase subunit alpha.